The chain runs to 131 residues: L-ectoine synthase (131 aa).

It belongs to the ectoine synthase family.

It carries out the reaction (2S)-4-acetamido-2-aminobutanoate = L-ectoine + H2O. The protein operates within amine and polyamine biosynthesis; ectoine biosynthesis; L-ectoine from L-aspartate 4-semialdehyde: step 3/3. Its function is as follows. Catalyzes the circularization of gamma-N-acetyl-alpha,gamma-diaminobutyric acid (ADABA) to ectoine (1,4,5,6-tetrahydro-2-methyl-4-pyrimidine carboxylic acid), which is an excellent osmoprotectant. This is L-ectoine synthase from Bordetella bronchiseptica (strain ATCC BAA-588 / NCTC 13252 / RB50) (Alcaligenes bronchisepticus).